Consider the following 491-residue polypeptide: Ribonuclease G (491 aa).

The S1 motif domain occupies 40–129; it reads GNIYKGRVTR…LTTDITLPSR (90 aa). Residues D305 and D348 each coordinate Mg(2+).

This sequence belongs to the RNase E/G family. RNase G subfamily. Homodimer, in equilibrium with possible higher multimers. The cofactor is Mg(2+).

The protein resides in the cytoplasm. In terms of biological role, an endonuclease that acts in the processing of the 5'-end of 16S rRNA and 23S rRNA. It prefers 5'-monophosphorylated substrates and cleaves single-stranded sites rich in A and U residues; contributes to tRNA processing and mRNA turnover. The polypeptide is Ribonuclease G (rng) (Haemophilus influenzae (strain ATCC 51907 / DSM 11121 / KW20 / Rd)).